The sequence spans 213 residues: MKGILGKKVGMTRVFKDDKAIPVTVIKAGPCVVVQKKTVETDGYNAIQIGFEEIPERKANKPLMGHFKKAQVKPLRYLREFRVENVDDYEIGQKIDVTIFSEGEKIDLIGNSKGRGYSGVMKRWNFRGGENTHGSKFHRGLGSTGMATFPSKVFKGKKMPGQYGNERVTIQNSEVVYIDVQNNLIAVKGGVPGARGGLVTIREAVKAKRPKTK.

The protein belongs to the universal ribosomal protein uL3 family. Part of the 50S ribosomal subunit. Forms a cluster with proteins L14 and L19.

One of the primary rRNA binding proteins, it binds directly near the 3'-end of the 23S rRNA, where it nucleates assembly of the 50S subunit. The chain is Large ribosomal subunit protein uL3 from Petrotoga mobilis (strain DSM 10674 / SJ95).